The primary structure comprises 232 residues: Dehydrogenase OXI1 (232 aa).

The N-terminal stretch at 1-20 (MTETFKVAITFVSPSSEALA) is a signal peptide. Position 19 (Leu19) interacts with NADP(+). The N-linked (GlcNAc...) asparagine glycan is linked to Asn28. NADP(+) contacts are provided by Asp42, Asn70, and Lys103. Asn117 carries N-linked (GlcNAc...) asparagine glycosylation. Catalysis depends on proton donor residues Ser119 and Ser121. Tyr133, Lys137, and Thr168 together coordinate NADP(+). Tyr133 acts as the Proton acceptor in catalysis. Lys137 serves as the catalytic Lowers pKa of active site Tyr.

The protein belongs to the short-chain dehydrogenases/reductases (SDR) family.

It carries out the reaction a primary alcohol + NAD(+) = an aldehyde + NADH + H(+). It catalyses the reaction a secondary alcohol + NAD(+) = a ketone + NADH + H(+). It functions in the pathway mycotoxin biosynthesis. Its function is as follows. Dehydrogenase; part of the Tox1A locus, one of the 2 loci that mediate the biosynthesis of T-toxin, a family of linear polyketides 37 to 45 carbons in length, of which the major component is 41 carbons, and which leads to high virulence to maize. One of the PKSs (PKS1 or PKS2) could synthesize a precursor, used subsequently by the other PKS as starter unit, to add additional carbons. Variability in the length of the final carbon backbone C35-47 could be achieved by varying the number of condensation cycles, or use of different starter or extender units or might be due to decarboxylation of the penultimate product, catalyzed by DEC1. Additional proteins are required for the biosynthesis of T-toxin, including oxidoreductases RED1, RED2, RED3, LAM1 and OXI1, as well as esterase TOX9. The protein is Dehydrogenase OXI1 of Cochliobolus heterostrophus (strain C4 / ATCC 48331 / race T) (Southern corn leaf blight fungus).